The chain runs to 316 residues: Ecto-ADP-ribosyltransferase 5 (316 aa).

Residues 1–23 (MIQATLLISLSCLSFYTLGSGVR) form the signal peptide. A disulfide bond links Cys-50 and Cys-266. N-linked (GlcNAc...) asparagine glycosylation occurs at Asn-68. Residues 70-261 (TRLRESWETA…MTLSSSDQMC (192 aa)) enclose the TR mART core domain. An NAD(+)-binding site is contributed by Tyr-107. An N-linked (GlcNAc...) asparagine glycan is attached at Asn-109. NAD(+)-binding residues include Arg-168 and Gln-188. Residue Arg-168 is part of the active site. Residue Ser-191 is part of the active site. Ser-222 contacts NAD(+). Glu-229 is an active-site residue. Residues Asn-242 and Asn-248 are each glycosylated (N-linked (GlcNAc...) asparagine).

This sequence belongs to the Arg-specific ADP-ribosyltransferase family.

The protein resides in the secreted. The protein localises to the membrane. The catalysed reaction is L-arginyl-[protein] + NAD(+) = N(omega)-(ADP-D-ribosyl)-L-arginyl-[protein] + nicotinamide + H(+). The chain is Ecto-ADP-ribosyltransferase 5 (ART5) from Bos taurus (Bovine).